A 294-amino-acid polypeptide reads, in one-letter code: MYB-like transcription factor ODO1 (294 aa).

2 HTH myb-type domains span residues 9-61 (KLGV…TNYL) and 62-116 (RPDL…KKKL). DNA-binding regions (H-T-H motif) lie at residues 37–61 (WRAVPKLAGLKRCGKSCRLRWTNYL) and 89–112 (WSKIAARLPGRTDNEIKNHWNTHI). Disordered stretches follow at residues 128 to 152 (PLKKEANLSDQPTTESDQNKENGHQ) and 171 to 191 (TEFDNNSSFSSSASSSENSSC).

Restricted to the petals, with the highest expression in the limb, probably in both epidermal and mesophyll cell layers.

The protein resides in the nucleus. R2R3 MYB-type transcription factor controlling the production of volatile organic compounds (VOCs), including floral volatile benzenoids and phenylpropanoids (FVBP), in flowers of fragrant cultivars (e.g. cv. Mitchell and cv. V26) by regulating the shikimate pathway, via the activation of several genes (e.g. EPSPS, ADT1, PAL1, CFAT and CCoAOMT1). This scent, mostly produced in the evening and night by the petals, attracts the pollinators (e.g. the night-active hawkmoth pollinator Manduca sexta). Promotes the expression of ABCG1 in petals three hours before the onset of volatile scent emission. Anthocyanins production is not controlled by ODO1 as color and scent are produced at different stages of development. Seems to trigger a negative feed-back loop that represses the expression of EOBI. The sequence is that of MYB-like transcription factor ODO1 from Petunia hybrida (Petunia).